The sequence spans 212 residues: Ribonuclease HII (212 aa).

The RNase H type-2 domain occupies 1-204; sequence MRVGIDEAGR…LRSTAPLYYI (204 aa). A divalent metal cation contacts are provided by D6, E7, and D103.

This sequence belongs to the RNase HII family. Mn(2+) serves as cofactor. Requires Mg(2+) as cofactor.

It is found in the cytoplasm. The catalysed reaction is Endonucleolytic cleavage to 5'-phosphomonoester.. Functionally, endonuclease that specifically degrades the RNA of RNA-DNA hybrids. The polypeptide is Ribonuclease HII (Saccharolobus solfataricus (strain ATCC 35092 / DSM 1617 / JCM 11322 / P2) (Sulfolobus solfataricus)).